Here is a 562-residue protein sequence, read N- to C-terminus: MKAPLRALICQGIEALRSNGTLPTNTLPPDFVVERPKTRKHGDFATNVAMLLSKATGSNPRLLAQTLVAALPTSADIARIEIAGPGFINFHLHPVAYQRETINVLKQDNDYGRNLSGQSRTVGVEYVSANPTGPLHVGHGRAAAIGDCLARLLEANGWNVKREFYYNDAGVQIENLVRSVQARARGLKPGDAFWPTDAYNGEYIADIAKAYLAGDSINMVDTIITSTKNVDDTAAIHHFAVNYLRNEQNHDLAAFNVDFDIYFLESSLYKDGKVEETVQKLINSGHTYEEGGALWLKSTHFGDDKDRVMRKSDGSYTYFVPDIAYHLSKWQRGYERAITELGADHHGSLARVHAGLQALEIGIPPGWPEYVLHQMVTVMRGGEEVKLSKRSGGYVTLRDLIEETSTDATRWFLIARKPDSQLTFDIDLARQKSNDNPVFYVQYAYARVCSLMHQAHEKNLNYDQTSGMASLDQLSDNTSLCLMIEISRYPEIVQIACELLEPHLIAQYLRELAHAFHTWYHNTPVLVENAVERNAKLTLACATRQVLANGLNLLGVGTPEKM.

Positions 129 to 139 match the 'HIGH' region motif; that stretch reads ANPTGPLHVGH.

The protein belongs to the class-I aminoacyl-tRNA synthetase family. Monomer.

The protein resides in the cytoplasm. It catalyses the reaction tRNA(Arg) + L-arginine + ATP = L-arginyl-tRNA(Arg) + AMP + diphosphate. This Xylella fastidiosa (strain 9a5c) protein is Arginine--tRNA ligase (argS).